We begin with the raw amino-acid sequence, 167 residues long: Aphrodisin (167 aa).

The N-terminal stretch at methionine 1–alanine 16 is a signal peptide. Glutamine 17 carries the pyrrolidone carboxylic acid modification. 2 disulfides stabilise this stretch: cysteine 54/cysteine 58 and cysteine 73/cysteine 165. Asparagine 57 and asparagine 85 each carry an N-linked (GlcNAc...) asparagine glycan.

It belongs to the calycin superfamily. Lipocalin family. Expressed in the vagina, uterus, and Bartholin's glands of female hamsters. Secreted in vaginal discharge.

Its subcellular location is the secreted. Acts as an aphrodisiac pheromone, reliably eliciting copulatory behavior from male hamster. This is Aphrodisin from Cricetus cricetus (Black-bellied hamster).